The following is a 147-amino-acid chain: Mannitol-specific cryptic phosphotransferase enzyme IIA component (147 aa).

In terms of domain architecture, PTS EIIA type-2 spans 5-147 (DYFPESSISV…KQLADIISRG (143 aa)). Residue H67 is the Tele-phosphohistidine intermediate of the active site. H67 is modified (phosphohistidine; by HPr).

The protein resides in the cytoplasm. Its function is as follows. The phosphoenolpyruvate-dependent sugar phosphotransferase system (sugar PTS), a major carbohydrate active transport system, catalyzes the phosphorylation of incoming sugar substrates concomitantly with their translocation across the cell membrane. The enzyme II CmtAB PTS system is involved in D-mannitol transport. This Escherichia coli O157:H7 protein is Mannitol-specific cryptic phosphotransferase enzyme IIA component (cmtB).